A 1036-amino-acid polypeptide reads, in one-letter code: Protein P200 (1036 aa).

The interval 697 to 727 (ETSELNTESDPSFEPEVEIQPEPEPNFDLET) is disordered. Residues 707–727 (PSFEPEVEIQPEPEPNFDLET) are compositionally biased toward acidic residues. 3 consecutive repeat copies span residues 718-723 (EPEPNF), 738-743 (EPEPNF), and 776-781 (EPEPNF). Residues 718 to 781 (EPEPNFDLET…SFESEPEPNF (64 aa)) are 3 X 6 AA repeats of E-P-E-P-N-F. 2 disordered regions span residues 757 to 784 (FESETEVQQELAQESSFESEPEPNFETE) and 798 to 845 (EAEV…ETEA). Acidic residues predominate over residues 773–784 (FESEPEPNFETE).

It localises to the cell projection. The protein localises to the attachment organelle. Its function is as follows. Protein cytoskeleton-associated which plays a role in gliding motility and perhaps also in mucociliary clearance. The chain is Protein P200 (p200) from Mycoplasma pneumoniae (strain ATCC 29342 / M129 / Subtype 1) (Mycoplasmoides pneumoniae).